We begin with the raw amino-acid sequence, 306 residues long: Acetyl-coenzyme A carboxylase carboxyl transferase subunit beta (306 aa).

One can recognise a CoA carboxyltransferase N-terminal domain in the interval 27-296 (LWHKCPSCEA…PKFVAAPIEP (270 aa)). C31, C34, C50, and C53 together coordinate Zn(2+). The C4-type zinc finger occupies 31 to 53 (CPSCEAVLYRPELEKTLDVCPKC).

It belongs to the AccD/PCCB family. As to quaternary structure, acetyl-CoA carboxylase is a heterohexamer composed of biotin carboxyl carrier protein (AccB), biotin carboxylase (AccC) and two subunits each of ACCase subunit alpha (AccA) and ACCase subunit beta (AccD). It depends on Zn(2+) as a cofactor.

It localises to the cytoplasm. The catalysed reaction is N(6)-carboxybiotinyl-L-lysyl-[protein] + acetyl-CoA = N(6)-biotinyl-L-lysyl-[protein] + malonyl-CoA. It participates in lipid metabolism; malonyl-CoA biosynthesis; malonyl-CoA from acetyl-CoA: step 1/1. Its function is as follows. Component of the acetyl coenzyme A carboxylase (ACC) complex. Biotin carboxylase (BC) catalyzes the carboxylation of biotin on its carrier protein (BCCP) and then the CO(2) group is transferred by the transcarboxylase to acetyl-CoA to form malonyl-CoA. This chain is Acetyl-coenzyme A carboxylase carboxyl transferase subunit beta, found in Pseudomonas fluorescens (strain Pf0-1).